The chain runs to 132 residues: Ribonuclease P protein component 4 (132 aa).

Positions 67, 70, 96, and 99 each coordinate Zn(2+).

The protein belongs to the eukaryotic/archaeal RNase P protein component 4 family. Consists of a catalytic RNA component and at least 4-5 protein subunits. Zn(2+) is required as a cofactor.

The protein localises to the cytoplasm. The catalysed reaction is Endonucleolytic cleavage of RNA, removing 5'-extranucleotides from tRNA precursor.. In terms of biological role, part of ribonuclease P, a protein complex that generates mature tRNA molecules by cleaving their 5'-ends. The polypeptide is Ribonuclease P protein component 4 (Thermococcus kodakarensis (strain ATCC BAA-918 / JCM 12380 / KOD1) (Pyrococcus kodakaraensis (strain KOD1))).